A 107-amino-acid chain; its full sequence is ATP-dependent Clp protease adapter protein ClpS (107 aa).

Belongs to the ClpS family. Binds to the N-terminal domain of the chaperone ClpA.

Functionally, involved in the modulation of the specificity of the ClpAP-mediated ATP-dependent protein degradation. This is ATP-dependent Clp protease adapter protein ClpS from Acinetobacter baylyi (strain ATCC 33305 / BD413 / ADP1).